The chain runs to 549 residues: T-complex protein 1 subunit theta (549 aa).

The protein belongs to the TCP-1 chaperonin family. Heterooligomeric complex of about 850 to 900 kDa that forms two stacked rings, 12 to 16 nm in diameter. Interacts with CCT3, KNAT1, STM and TTG1. In terms of tissue distribution, expressed in shoot meristems, root tip, vasculature and leaf epidermis.

It is found in the cytoplasm. Its function is as follows. Molecular chaperone; assists the folding of proteins upon ATP hydrolysis. Known to play a role, in vitro, in the folding of actin and tubulin. Contributes to stem cell maintenance through its impact on transcription factors trafficking through plasmodesmata. Probably involved in refolding translocated, partially unfolded proteins, including viral movement proteins. The sequence is that of T-complex protein 1 subunit theta from Arabidopsis thaliana (Mouse-ear cress).